Here is a 344-residue protein sequence, read N- to C-terminus: Probable glucan endo-1,3-beta-glucosidase At4g16260 (344 aa).

Positions 1–21 are cleaved as a signal peptide; it reads MTTLFLLIALFITTILNPTSG. Glu-116 (proton donor) is an active-site residue. Glu-257 (nucleophile) is an active-site residue.

It belongs to the glycosyl hydrolase 17 family. As to quaternary structure, (Microbial infection) Interacts with the 30C02 effector protein (AC G3GD54) of the beet cyst nematode Heterodera schachtii. Interaction with the 30C02 effector protein may potentially suppress beta-1,3-glucanase activity and plant defense.

The protein localises to the secreted. It catalyses the reaction Hydrolysis of (1-&gt;3)-beta-D-glucosidic linkages in (1-&gt;3)-beta-D-glucans.. Its function is as follows. May be involved in plant defense against cyst nematode pathogens. This chain is Probable glucan endo-1,3-beta-glucosidase At4g16260, found in Arabidopsis thaliana (Mouse-ear cress).